Reading from the N-terminus, the 161-residue chain is MKIRGRALVYGDKIDTDVIIPAKYLVYTDPALLGQHAMEPLDPEFPKKAKGAVLVAGRAFGMGSSREQAALALKGAGVLAVVAESFARIFFRNAINVGLPVLQAPGIREKVKDGDEVELDVEGGIVRNITTGEVIVGKPLRGLPLEILKAGGLLNYLKNSR.

This sequence belongs to the LeuD family. LeuD type 2 subfamily. In terms of assembly, heterodimer of LeuC and LeuD.

The catalysed reaction is (2R,3S)-3-isopropylmalate = (2S)-2-isopropylmalate. The protein operates within amino-acid biosynthesis; L-leucine biosynthesis; L-leucine from 3-methyl-2-oxobutanoate: step 2/4. Catalyzes the isomerization between 2-isopropylmalate and 3-isopropylmalate, via the formation of 2-isopropylmaleate. The chain is 3-isopropylmalate dehydratase small subunit (leuD) from Pyrobaculum aerophilum (strain ATCC 51768 / DSM 7523 / JCM 9630 / CIP 104966 / NBRC 100827 / IM2).